We begin with the raw amino-acid sequence, 84 residues long: Small ribosomal subunit protein bS16 (84 aa).

It belongs to the bacterial ribosomal protein bS16 family.

This is Small ribosomal subunit protein bS16 from Delftia acidovorans (strain DSM 14801 / SPH-1).